We begin with the raw amino-acid sequence, 217 residues long: Carbon disulfide hydrolase (217 aa).

Zn(2+)-binding residues include C39, H98, and C101. The segment at 192-217 (DKEKRARTDCTPTPYGVKGNQPPRWK) is disordered.

The protein belongs to the beta-class carbonic anhydrase family. Forms only homooctamers in solution. Zn(2+) is required as a cofactor.

The enzyme catalyses carbon disulfide + 2 H2O = 2 hydrogen sulfide + CO2 + 2 H(+). Its pathway is sulfur metabolism; hydrogen sulfide biosynthesis. Functionally, catalyzes the conversion of carbon disulfide into hydrogen sulfide and carbon dioxide, with carbonyl sulfide as an intermediate. Likely plays a key role in sulfur metabolism that allows A.thiooxidans S1p to grow on carbon disulfide as the main carbon and energy source. Does not show carbonic anhydrase activity (hydration of CO(2) to carbonate). The chain is Carbon disulfide hydrolase from Acidithiobacillus thiooxidans (Thiobacillus thiooxidans).